Reading from the N-terminus, the 294-residue chain is N-acetylmuramic acid 6-phosphate etherase (294 aa).

Positions 54-217 (TIHSFKSNGR…STASMIGVGK (164 aa)) constitute an SIS domain. Glu-82 (proton donor) is an active-site residue. The active site involves Glu-113.

It belongs to the GCKR-like family. MurNAc-6-P etherase subfamily. In terms of assembly, homodimer.

It carries out the reaction N-acetyl-D-muramate 6-phosphate + H2O = N-acetyl-D-glucosamine 6-phosphate + (R)-lactate. It functions in the pathway amino-sugar metabolism; N-acetylmuramate degradation. Its function is as follows. Specifically catalyzes the cleavage of the D-lactyl ether substituent of MurNAc 6-phosphate, producing GlcNAc 6-phosphate and D-lactate. The sequence is that of N-acetylmuramic acid 6-phosphate etherase from Oceanobacillus iheyensis (strain DSM 14371 / CIP 107618 / JCM 11309 / KCTC 3954 / HTE831).